The following is a 349-amino-acid chain: Phenylalanine--tRNA ligase alpha subunit (349 aa).

Mg(2+) is bound at residue Glu-259.

The protein belongs to the class-II aminoacyl-tRNA synthetase family. Phe-tRNA synthetase alpha subunit type 1 subfamily. In terms of assembly, tetramer of two alpha and two beta subunits. Requires Mg(2+) as cofactor.

Its subcellular location is the cytoplasm. The catalysed reaction is tRNA(Phe) + L-phenylalanine + ATP = L-phenylalanyl-tRNA(Phe) + AMP + diphosphate + H(+). The chain is Phenylalanine--tRNA ligase alpha subunit from Lactobacillus johnsonii (strain CNCM I-12250 / La1 / NCC 533).